Here is a 205-residue protein sequence, read N- to C-terminus: dITP/XTP pyrophosphatase (205 aa).

Residue 7-12 (SNNRGK) participates in substrate binding. Mg(2+) contacts are provided by E39 and D68. D68 (proton acceptor) is an active-site residue. Residues A69, 154–157 (FGFD), K177, and 182–183 (HR) each bind substrate.

The protein belongs to the HAM1 NTPase family. As to quaternary structure, homodimer. Requires Mg(2+) as cofactor.

The catalysed reaction is XTP + H2O = XMP + diphosphate + H(+). The enzyme catalyses dITP + H2O = dIMP + diphosphate + H(+). It carries out the reaction ITP + H2O = IMP + diphosphate + H(+). Functionally, pyrophosphatase that catalyzes the hydrolysis of nucleoside triphosphates to their monophosphate derivatives, with a high preference for the non-canonical purine nucleotides XTP (xanthosine triphosphate), dITP (deoxyinosine triphosphate) and ITP. Seems to function as a house-cleaning enzyme that removes non-canonical purine nucleotides from the nucleotide pool, thus preventing their incorporation into DNA/RNA and avoiding chromosomal lesions. This is dITP/XTP pyrophosphatase from Acidovorax ebreus (strain TPSY) (Diaphorobacter sp. (strain TPSY)).